We begin with the raw amino-acid sequence, 309 residues long: Methionyl-tRNA formyltransferase (309 aa).

107 to 110 is a binding site for (6S)-5,6,7,8-tetrahydrofolate; it reads SLLP.

This sequence belongs to the Fmt family.

It catalyses the reaction L-methionyl-tRNA(fMet) + (6R)-10-formyltetrahydrofolate = N-formyl-L-methionyl-tRNA(fMet) + (6S)-5,6,7,8-tetrahydrofolate + H(+). Attaches a formyl group to the free amino group of methionyl-tRNA(fMet). The formyl group appears to play a dual role in the initiator identity of N-formylmethionyl-tRNA by promoting its recognition by IF2 and preventing the misappropriation of this tRNA by the elongation apparatus. This Borrelia turicatae (strain 91E135) protein is Methionyl-tRNA formyltransferase.